A 350-amino-acid chain; its full sequence is tRNA uridine(34) hydroxylase (350 aa).

The region spanning Asp-146–Leu-240 is the Rhodanese domain. Residue Cys-200 is the Cysteine persulfide intermediate of the active site.

It belongs to the TrhO family.

The enzyme catalyses uridine(34) in tRNA + AH2 + O2 = 5-hydroxyuridine(34) in tRNA + A + H2O. Catalyzes oxygen-dependent 5-hydroxyuridine (ho5U) modification at position 34 in tRNAs, the first step in 5-carboxymethoxyuridine (cmo5U) biosynthesis. May be part of an alternate pathway, which is able to bypass cmo5U biogenesis in a subset of tRNAs under aerobic conditions. The sequence is that of tRNA uridine(34) hydroxylase from Escherichia coli (strain SMS-3-5 / SECEC).